A 200-amino-acid chain; its full sequence is Cation channel sperm-associated auxiliary subunit zeta (200 aa).

A compositionally biased stretch (basic and acidic residues) spans 1–29; the sequence is MEEKPSKVSLKSSDRQGSDEESVHSDTRD. Disordered regions lie at residues 1–31 and 58–78; these read MEEKPSKVSLKSSDRQGSDEESVHSDTRDLW and NISKTRGWHSPGRGSLDEGYK.

As to quaternary structure, component of the CatSper complex or CatSpermasome composed of the core pore-forming members CATSPER1, CATSPER2, CATSPER3 and CATSPER4 as well as auxiliary members CATSPERB, CATSPERG, CATSPERD, CATSPERE, CATSPERZ, C2CD6/CATSPERT, TMEM249, TMEM262 and EFCAB9. HSPA1 may be an additional auxiliary complex member. The core complex members CATSPER1, CATSPER2, CATSPER3 and CATSPER4 form a heterotetrameric channel. The auxiliary CATSPERB, CATSPERG, CATSPERD and CATSPERE subunits form a pavilion-like structure over the pore which stabilizes the complex through interactions with CATSPER4, CATSPER3, CATSPER1 and CATSPER2 respectively. TMEM262/CATSPERH interacts with CATSPERB, further stabilizing the complex. C2CD6/CATSPERT interacts at least with CATSPERD and is required for targeting the CatSper complex in the flagellar membrane. Interacts with EFCAB9; the interaction is direct, Ca(2+)-dependent and connects EFCAB9 with the CatSper complex. Dissociates from EFCAB9 at elevated pH.

It localises to the cell projection. The protein localises to the cilium. The protein resides in the flagellum membrane. Its function is as follows. Auxiliary component of the CatSper complex, a complex involved in sperm cell hyperactivation. Sperm cell hyperactivation is needed for sperm motility which is essential late in the preparation of sperm for fertilization. Required for a distribution of the CatSper complex in linear quadrilateral nanodomains along the flagellum, maximizing fertilization inside the mammalian female reproductive tract. Together with EFCAB9, associates with the CatSper channel pore and is required for the two-row structure of each single CatSper channel. The protein is Cation channel sperm-associated auxiliary subunit zeta of Homo sapiens (Human).